Here is a 162-residue protein sequence, read N- to C-terminus: Regulator of sigma D (162 aa).

Belongs to the Rsd/AlgQ family. Interacts with RpoD.

It is found in the cytoplasm. In terms of biological role, binds RpoD and negatively regulates RpoD-mediated transcription activation by preventing the interaction between the primary sigma factor RpoD with the catalytic core of the RNA polymerase and with promoter DNA. May be involved in replacement of the RNA polymerase sigma subunit from RpoD to RpoS during the transition from exponential growth to the stationary phase. This Salmonella typhi protein is Regulator of sigma D.